The chain runs to 60 residues: Large ribosomal subunit protein bL32 (60 aa).

The segment covering 1–16 (MAVPRRKTSPSRRGMR) has biased composition (basic residues). Residues 1 to 60 (MAVPRRKTSPSRRGMRRSADAIKKPTYVEDKDSGELRRPHHLDLKTGMYKGRQVLKKKDA) are disordered. Basic and acidic residues predominate over residues 17–44 (RSADAIKKPTYVEDKDSGELRRPHHLDL).

This sequence belongs to the bacterial ribosomal protein bL32 family.

The polypeptide is Large ribosomal subunit protein bL32 (Bradyrhizobium sp. (strain BTAi1 / ATCC BAA-1182)).